The chain runs to 351 residues: Phosphatidylinositol transfer protein PDR16 (351 aa).

The region spanning 135-295 is the CRAL-TRIO domain; sequence LVAVENESGK…LYGGDLKFKY (161 aa).

As to quaternary structure, homodimer. Apo-SFH3 forms a dimer through the hydrophobic interaction of gating helices. Binding of phosphatidylinositol leads to dissociation of the dimer into monomers in a reversible manner.

Its subcellular location is the lipid droplet. It localises to the microsome membrane. The protein resides in the endoplasmic reticulum membrane. It carries out the reaction a 1,2-diacyl-sn-glycero-3-phospho-(1D-myo-inositol)(in) = a 1,2-diacyl-sn-glycero-3-phospho-(1D-myo-inositol)(out). Functionally, has phosphatidylinositol transfer activity. Involved in the regulation of the phospholipid composition of plasma- and endomembranes. Altering plasma membrane composition may provide a possible mechanism for multidrug resistance. Involved in the regulation of sterol biosynthesis. Contributes to efficient phospholipase D1 activation in the regulation of phospholipid turnover. Regulates the release of fatty acids from lipid droplets. This chain is Phosphatidylinositol transfer protein PDR16 (PDR16), found in Saccharomyces cerevisiae (strain ATCC 204508 / S288c) (Baker's yeast).